The following is a 235-amino-acid chain: Leucyl/phenylalanyl-tRNA--protein transferase (235 aa).

It belongs to the L/F-transferase family.

The protein resides in the cytoplasm. The enzyme catalyses N-terminal L-lysyl-[protein] + L-leucyl-tRNA(Leu) = N-terminal L-leucyl-L-lysyl-[protein] + tRNA(Leu) + H(+). The catalysed reaction is N-terminal L-arginyl-[protein] + L-leucyl-tRNA(Leu) = N-terminal L-leucyl-L-arginyl-[protein] + tRNA(Leu) + H(+). It catalyses the reaction L-phenylalanyl-tRNA(Phe) + an N-terminal L-alpha-aminoacyl-[protein] = an N-terminal L-phenylalanyl-L-alpha-aminoacyl-[protein] + tRNA(Phe). Its function is as follows. Functions in the N-end rule pathway of protein degradation where it conjugates Leu, Phe and, less efficiently, Met from aminoacyl-tRNAs to the N-termini of proteins containing an N-terminal arginine or lysine. The polypeptide is Leucyl/phenylalanyl-tRNA--protein transferase (Methylococcus capsulatus (strain ATCC 33009 / NCIMB 11132 / Bath)).